Consider the following 876-residue polypeptide: Leucine--tRNA ligase (876 aa).

A 'HIGH' region motif is present at residues 42–52; it reads PYPSGKLHMGH. The 'KMSKS' region motif lies at 634-638; the sequence is KMSKS. Lys-637 is a binding site for ATP.

It belongs to the class-I aminoacyl-tRNA synthetase family.

Its subcellular location is the cytoplasm. The catalysed reaction is tRNA(Leu) + L-leucine + ATP = L-leucyl-tRNA(Leu) + AMP + diphosphate. This Neisseria meningitidis serogroup C (strain 053442) protein is Leucine--tRNA ligase.